The following is a 413-amino-acid chain: CinA-like protein (413 aa).

Belongs to the CinA family.

This Geobacter metallireducens (strain ATCC 53774 / DSM 7210 / GS-15) protein is CinA-like protein.